The primary structure comprises 158 residues: MQRYPMTPQGHAALEAELKQLKSVDRPRITAAIAEAREHGDLKENAEYHAAREQQGFCEARIRDIEAKLSGAQVIDPATLPREGRVVFGVTVVIENLDTEEQKRYQIVGDDEADFKNNKISVNSPIARGLIGKSEGDEARIETPSGLVEFEIIEVIYQ.

The protein belongs to the GreA/GreB family.

In terms of biological role, necessary for efficient RNA polymerase transcription elongation past template-encoded arresting sites. The arresting sites in DNA have the property of trapping a certain fraction of elongating RNA polymerases that pass through, resulting in locked ternary complexes. Cleavage of the nascent transcript by cleavage factors such as GreA or GreB allows the resumption of elongation from the new 3'terminus. GreA releases sequences of 2 to 3 nucleotides. This Psychrobacter sp. (strain PRwf-1) protein is Transcription elongation factor GreA.